Here is a 176-residue protein sequence, read N- to C-terminus: MGFPKEGEKVQIHSYKHNGSIHRMWEETTILKGTQSLVIGANDRTVVTESDGRTWITREPAICYFHANYWFNVIGMLREDGVYYYCNLSSPFAYDPEALKYIDYDLDIKVYPDMTYTLLDEDEYEKHSEIMQYPPVIDTILKRNVAHLTQWIHQRKGPFAPDFVDMWYERYLMYRN.

Catalysis depends on Arg-23, which acts as the Proton donor. Asn-87, Asp-103, Asp-105, Asp-107, Asp-120, and Glu-123 together coordinate Mg(2+).

It belongs to the Ntdp family. Mg(2+) is required as a cofactor.

The enzyme catalyses a ribonucleoside 5'-triphosphate + H2O = a ribonucleoside 5'-diphosphate + phosphate + H(+). It catalyses the reaction a ribonucleoside 5'-diphosphate + H2O = a ribonucleoside 5'-phosphate + phosphate + H(+). In terms of biological role, has nucleoside phosphatase activity towards nucleoside triphosphates and nucleoside diphosphates. The sequence is that of Nucleoside triphosphate/diphosphate phosphatase from Bacillus cereus (strain B4264).